Reading from the N-terminus, the 229-residue chain is Peptidase E (229 aa).

Active-site charge relay system residues include Ser120, Asp135, and His157.

This sequence belongs to the peptidase S51 family.

It is found in the cytoplasm. It catalyses the reaction Dipeptidase E catalyzes the hydrolysis of dipeptides Asp-|-Xaa. It does not act on peptides with N-terminal Glu, Asn or Gln, nor does it cleave isoaspartyl peptides.. Functionally, hydrolyzes dipeptides containing N-terminal aspartate residues. May play a role in allowing the cell to use peptide aspartate to spare carbon otherwise required for the synthesis of the aspartate family of amino acids. This Salmonella typhi protein is Peptidase E.